The primary structure comprises 369 residues: Glutamate 5-kinase (369 aa).

Lys-9 lines the ATP pocket. Substrate contacts are provided by Ser-49, Asp-136, and Asn-148. ATP is bound by residues 168–169 (TD) and 210–216 (TGGMLTK). One can recognise a PUA domain in the interval 275 to 355 (RGGVYVDEGA…KGVFIHRDDW (81 aa)).

The protein belongs to the glutamate 5-kinase family.

Its subcellular location is the cytoplasm. It carries out the reaction L-glutamate + ATP = L-glutamyl 5-phosphate + ADP. The protein operates within amino-acid biosynthesis; L-proline biosynthesis; L-glutamate 5-semialdehyde from L-glutamate: step 1/2. Functionally, catalyzes the transfer of a phosphate group to glutamate to form L-glutamate 5-phosphate. This Neisseria meningitidis serogroup A / serotype 4A (strain DSM 15465 / Z2491) protein is Glutamate 5-kinase.